We begin with the raw amino-acid sequence, 296 residues long: Protoheme IX farnesyltransferase (296 aa).

9 helical membrane-spanning segments follow: residues 9–29, 36–56, 75–95, 99–119, 133–153, 163–183, 209–229, 234–254, and 265–285; these read VTKP…FLLA, YPLF…GCVF, VLVK…VLGI, LLLY…GFVI, VYGT…GYCA, LILL…IAIF, ITLY…SGYA, LVVA…GYKA, and FVFS…DFNV.

It belongs to the UbiA prenyltransferase family. Protoheme IX farnesyltransferase subfamily.

It localises to the cell inner membrane. It carries out the reaction heme b + (2E,6E)-farnesyl diphosphate + H2O = Fe(II)-heme o + diphosphate. It participates in porphyrin-containing compound metabolism; heme O biosynthesis; heme O from protoheme: step 1/1. Functionally, converts heme B (protoheme IX) to heme O by substitution of the vinyl group on carbon 2 of heme B porphyrin ring with a hydroxyethyl farnesyl side group. This chain is Protoheme IX farnesyltransferase, found in Yersinia pestis bv. Antiqua (strain Antiqua).